The chain runs to 81 residues: Cytotoxin 3a (81 aa).

Residues 1 to 21 (MKTLLLTLVVVTIVCLDLGYT) form the signal peptide. Intrachain disulfides connect Cys-24–Cys-42, Cys-35–Cys-59, Cys-63–Cys-74, and Cys-75–Cys-80.

The protein belongs to the three-finger toxin family. Short-chain subfamily. Type IA cytotoxin sub-subfamily. Monomer in solution; Homodimer and oligomer in the presence of negatively charged lipids forming a pore with a size ranging between 20 and 30 Angstroms. In terms of tissue distribution, expressed by the venom gland.

Its subcellular location is the secreted. It is found in the target cell membrane. Its function is as follows. Shows cytolytic activity on many different cells by forming pore in lipid membranes. In vivo, increases heart rate or kills the animal by cardiac arrest. In addition, it binds to heparin with high affinity, interacts with Kv channel-interacting protein 1 (KCNIP1) in a calcium-independent manner, and binds to integrin alpha-V/beta-3 (ITGAV/ITGB3) with moderate affinity. This Naja atra (Chinese cobra) protein is Cytotoxin 3a.